Reading from the N-terminus, the 61-residue chain is Large ribosomal subunit protein eL37 (61 aa).

Positions 18, 21, 33, and 36 each coordinate Zn(2+). Residues 18–36 (CRRCGRNAYNPTKKYCASC) form a C4-type zinc finger.

This sequence belongs to the eukaryotic ribosomal protein eL37 family. Requires Zn(2+) as cofactor.

Functionally, binds to the 23S rRNA. The polypeptide is Large ribosomal subunit protein eL37 (Methanosphaera stadtmanae (strain ATCC 43021 / DSM 3091 / JCM 11832 / MCB-3)).